The following is a 467-amino-acid chain: Ribulose bisphosphate carboxylase large chain (467 aa).

An N6,N6,N6-trimethyllysine modification is found at K5. Substrate is bound by residues N114 and T164. The active-site Proton acceptor is K166. Substrate is bound at residue K168. K192, D194, and E195 together coordinate Mg(2+). Position 192 is an N6-carboxylysine (K192). Catalysis depends on H285, which acts as the Proton acceptor. Residues R286, H318, and S370 each coordinate substrate.

The protein belongs to the RuBisCO large chain family. Type I subfamily. In terms of assembly, heterohexadecamer of 8 large chains and 8 small chains; disulfide-linked. The disulfide link is formed within the large subunit homodimers. Mg(2+) serves as cofactor. Post-translationally, the disulfide bond which can form in the large chain dimeric partners within the hexadecamer appears to be associated with oxidative stress and protein turnover.

The protein resides in the plastid. The protein localises to the chloroplast. The enzyme catalyses 2 (2R)-3-phosphoglycerate + 2 H(+) = D-ribulose 1,5-bisphosphate + CO2 + H2O. It carries out the reaction D-ribulose 1,5-bisphosphate + O2 = 2-phosphoglycolate + (2R)-3-phosphoglycerate + 2 H(+). Functionally, ruBisCO catalyzes two reactions: the carboxylation of D-ribulose 1,5-bisphosphate, the primary event in carbon dioxide fixation, as well as the oxidative fragmentation of the pentose substrate in the photorespiration process. Both reactions occur simultaneously and in competition at the same active site. The polypeptide is Ribulose bisphosphate carboxylase large chain (Jasminum simplicifolium subsp. suavissimum (Native jasmine)).